Here is a 247-residue protein sequence, read N- to C-terminus: DNA-directed RNA polymerase subunit Rpo3 (247 aa).

Belongs to the archaeal Rpo3/eukaryotic RPB3 RNA polymerase subunit family. As to quaternary structure, part of the RNA polymerase complex.

The protein resides in the cytoplasm. The catalysed reaction is RNA(n) + a ribonucleoside 5'-triphosphate = RNA(n+1) + diphosphate. In terms of biological role, DNA-dependent RNA polymerase (RNAP) catalyzes the transcription of DNA into RNA using the four ribonucleoside triphosphates as substrates. The protein is DNA-directed RNA polymerase subunit Rpo3 of Natronomonas pharaonis (strain ATCC 35678 / DSM 2160 / CIP 103997 / JCM 8858 / NBRC 14720 / NCIMB 2260 / Gabara) (Halobacterium pharaonis).